The sequence spans 130 residues: Small ribosomal subunit protein uS9 (130 aa).

Belongs to the universal ribosomal protein uS9 family.

In Methylococcus capsulatus (strain ATCC 33009 / NCIMB 11132 / Bath), this protein is Small ribosomal subunit protein uS9.